Reading from the N-terminus, the 61-residue chain is Fasciculin-2 (61 aa).

4 disulfides stabilise this stretch: Cys-3–Cys-22, Cys-17–Cys-39, Cys-41–Cys-52, and Cys-53–Cys-59.

Belongs to the three-finger toxin family. Short-chain subfamily. Acn-esterase inhibitor sub-subfamily. Expressed by the venom gland.

It localises to the secreted. Interferes with neuromuscular transmission by inhibiting the enzyme acetylcholinesterase (AChE) present at the neuromuscular junction. It selectively binds and inhibits with a 1:1 stoichiometry the mammalian and electric fish AChE at picomolar concentrations. It is highly specific for the peripheral site of AChE and blocks the entry of acetylcholine into the active site of the enzyme (through the Met-33 residue), thereby preventing its breakdown. It has been called fasciculin since after injection into mice it causes severe, generalized and long-lasting (5-7 hours) fasciculations. The protein is Fasciculin-2 of Dendroaspis angusticeps (Eastern green mamba).